The chain runs to 479 residues: Poly(A) polymerase catalytic subunit (479 aa).

Catalysis depends on residues Asp-202 and Asp-204. Residues Asp-202, Asp-204, and Asp-253 each contribute to the Ca(2+) site.

Belongs to the poxviridae poly(A) polymerase catalytic subunit family. Heterodimer of a large (catalytic) subunit and a small (regulatory) subunit.

The enzyme catalyses RNA(n) + ATP = RNA(n)-3'-adenine ribonucleotide + diphosphate. In terms of biological role, polymerase that creates the 3'-poly(A) tail of mRNA's. This Bos taurus (Bovine) protein is Poly(A) polymerase catalytic subunit (OPG063).